Here is a 254-residue protein sequence, read N- to C-terminus: 4-hydroxy-tetrahydrodipicolinate reductase (254 aa).

8-13 (GAFGRM) contacts NAD(+). An NADP(+)-binding site is contributed by Lys36. Residues 89-91 (GTT) and 115-118 (STNY) each bind NAD(+). The active-site Proton donor/acceptor is the His147. His148 contacts (S)-2,3,4,5-tetrahydrodipicolinate. The active-site Proton donor is Lys151. 157–158 (GT) contributes to the (S)-2,3,4,5-tetrahydrodipicolinate binding site.

It belongs to the DapB family.

It is found in the cytoplasm. It carries out the reaction (S)-2,3,4,5-tetrahydrodipicolinate + NAD(+) + H2O = (2S,4S)-4-hydroxy-2,3,4,5-tetrahydrodipicolinate + NADH + H(+). It catalyses the reaction (S)-2,3,4,5-tetrahydrodipicolinate + NADP(+) + H2O = (2S,4S)-4-hydroxy-2,3,4,5-tetrahydrodipicolinate + NADPH + H(+). It participates in amino-acid biosynthesis; L-lysine biosynthesis via DAP pathway; (S)-tetrahydrodipicolinate from L-aspartate: step 4/4. Its function is as follows. Catalyzes the conversion of 4-hydroxy-tetrahydrodipicolinate (HTPA) to tetrahydrodipicolinate. This chain is 4-hydroxy-tetrahydrodipicolinate reductase, found in Methanospirillum hungatei JF-1 (strain ATCC 27890 / DSM 864 / NBRC 100397 / JF-1).